A 72-amino-acid polypeptide reads, in one-letter code: Alpha-conotoxin SII (72 aa).

Residues 1 to 21 (MGMRMMFTVFLLVVLATTVVS) form the signal peptide. A propeptide spanning residues 22 to 50 (FPSDRASDGRDDEAKDERSDMHESDRNGR) is cleaved from the precursor. The interval 23–51 (PSDRASDGRDDEAKDERSDMHESDRNGRG) is disordered. Residues 26–49 (RASDGRDDEAKDERSDMHESDRNG) are compositionally biased toward basic and acidic residues. Intrachain disulfides connect C52-C68, C53-C58, and C54-C64. The propeptide occupies 70–72 (RTL).

The protein belongs to the conotoxin A superfamily. The disulfide bond Cys-52-Cys-68 (Cys I-VI), which corresponds to an extra disulfide bond when compared to the cysteine framework I (CC-C-C), does contribute to conotoxin SII stability and imparts a unique binding mode at the nAChR. In terms of tissue distribution, expressed by the venom duct.

It localises to the secreted. Its function is as follows. Alpha-conotoxins act on postsynaptic membranes, they bind to the nicotinic acetylcholine receptors (nAChR) and thus inhibit them. This toxin potently inhibits the rodent muscle nAChR (IC(50)=120 nM (adult subtype, alpha-1-beta-1-delta-epsilon/CHRNA1-CHRNB1-CHRND-CHRNE) and IC(50)=370 nM (fetal subtype, alpha-1-beta-1-gamma-delta/CHRNA1-CHRNB1-CHRNG-CHRND)) and weakly inhibits neuronal nAChRs. In contrast to alpha-conotoxins bearing 2 disulfide bonds (framework I), this conotoxin acts via a unique binding mode with the helix and the N- and C-termini buried in the binding pocket of muscle nAChRs. This Conus striatus (Striated cone) protein is Alpha-conotoxin SII.